We begin with the raw amino-acid sequence, 89 residues long: Small ribosomal subunit protein bS20 (89 aa).

The segment at 1 to 20 (MANHKSAEKRARQTIKRTER) is disordered.

It belongs to the bacterial ribosomal protein bS20 family.

In terms of biological role, binds directly to 16S ribosomal RNA. The sequence is that of Small ribosomal subunit protein bS20 from Campylobacter concisus (strain 13826).